We begin with the raw amino-acid sequence, 1059 residues long: MPKRKDIQKIMVIGSGPIVIGQAAEFDYAGTQACLSLKEEGYSVVLVNSNPATIMTDKEIADRVYIEPITLEFVARILRKERPDALLPTLGGQTGLNMAMELSKSGLLEELGVELLGTKLSAIDQAEDRDLFKQLMEELGQPIPESEIVNTVDEALEFAAGIGYPVIVRPAFTLGGTGGGICSNEEELQEIAENGLKLSPVTQCLIERSIAGFKEIEYEVMRDGADNALVVCNMENFDPVGIHTGDSIVFAPSQTISDYEYQMLRDASLKIIRALKIEGGCNVQLALDPHSFKYYVIEVNPRVSRSSALASKATGYPIAKLAAKIAVGLTLDEIINPVTGSTYAMFEPALDYVVAKIPRFPFDKFEQGERRLGTQMKATGEVMAIGRNIEESLLKACRSLEVCVDHNELPALSQVSDDELMRKIVKAQDDRLFYISEAIRRGYSPDEIAELTKIDVFFLDKLLHIYEIEQELASHIGDSYVLKKAKQNGFADTKIASLWDMTAEQVRRIRQEQKIVPVYKMVDTCAAEFESATPYFYSTYGFENESVKSSKESVLVLGSGPIRIGQGVEFDYATVHSVKAIQAAGYEAIIMNSNPETVSTDFSVSDKLYFEPLTFEDVMNVIELEQPKGVIVQFGGQTAINLAEPLSKAGVKILGTQVADLDRAEDRDLFEQALKELDIPQPPGQTATNEEEAVEAARKIGFPVLVRPSYVLGGRAMEIVENEADLRSYMRTAVKASPDHPVLVDSYIVGDECEVDAISDGRQVLIPGIMEHIERAGVHSGDSMAAYPPQTLSQKVKDTIADYTKRLALGLNCIGMMNIQFVIKDEQVYVIEVNPRASRTVPFLSKVTDIPMAQVATRLILGETLAELGYEDGLYPESSMVHIKAPVFSFTKLAKVDSLLGPEMKSTGEVMGSDRTLEKALYKAFEASYLHLPNFGNIVFTIAGDSKEEALQLAQRFANIGYGIWATKGTASYFENHGLHVRLVEKIGSDDDKDIPAYIRKGKVQAIINTVGTKRTADKHGQIIRSSAIEHGVPLFTALDTADAMLKVLESRSFTTEAI.

The carboxyphosphate synthetic domain stretch occupies residues 1 to 401 (MPKRKDIQKI…SLLKACRSLE (401 aa)). Arginine 129, arginine 169, glycine 175, glycine 176, arginine 208, isoleucine 210, glutamate 215, glycine 241, isoleucine 242, histidine 243, glutamine 284, and glutamate 298 together coordinate ATP. The ATP-grasp 1 domain occupies 133 to 327 (KQLMEELGQP…IAKLAAKIAV (195 aa)). Residues glutamine 284, glutamate 298, and asparagine 300 each coordinate Mg(2+). Residues glutamine 284, glutamate 298, and asparagine 300 each contribute to the Mn(2+) site. The segment at 402 to 546 (VCVDHNELPA…YSTYGFENES (145 aa)) is oligomerization domain. Residues 547-929 (VKSSKESVLV…ALYKAFEASY (383 aa)) are carbamoyl phosphate synthetic domain. The region spanning 671–861 (EQALKELDIP…MAQVATRLIL (191 aa)) is the ATP-grasp 2 domain. Residues arginine 707, serine 746, isoleucine 748, glutamate 752, glycine 777, valine 778, histidine 779, serine 780, glutamine 820, and glutamate 832 each coordinate ATP. The Mg(2+) site is built by glutamine 820, glutamate 832, and asparagine 834. Residues glutamine 820, glutamate 832, and asparagine 834 each coordinate Mn(2+). The region spanning 930-1059 (LHLPNFGNIV…ESRSFTTEAI (130 aa)) is the MGS-like domain. Positions 930–1059 (LHLPNFGNIV…ESRSFTTEAI (130 aa)) are allosteric domain.

This sequence belongs to the CarB family. In terms of assembly, composed of two chains; the small (or glutamine) chain promotes the hydrolysis of glutamine to ammonia, which is used by the large (or ammonia) chain to synthesize carbamoyl phosphate. Tetramer of heterodimers (alpha,beta)4. Mg(2+) serves as cofactor. Requires Mn(2+) as cofactor.

The catalysed reaction is hydrogencarbonate + L-glutamine + 2 ATP + H2O = carbamoyl phosphate + L-glutamate + 2 ADP + phosphate + 2 H(+). The enzyme catalyses hydrogencarbonate + NH4(+) + 2 ATP = carbamoyl phosphate + 2 ADP + phosphate + 2 H(+). It participates in amino-acid biosynthesis; L-arginine biosynthesis; carbamoyl phosphate from bicarbonate: step 1/1. Its pathway is pyrimidine metabolism; UMP biosynthesis via de novo pathway; (S)-dihydroorotate from bicarbonate: step 1/3. In terms of biological role, large subunit of the glutamine-dependent carbamoyl phosphate synthetase (CPSase). CPSase catalyzes the formation of carbamoyl phosphate from the ammonia moiety of glutamine, carbonate, and phosphate donated by ATP, constituting the first step of 2 biosynthetic pathways, one leading to arginine and/or urea and the other to pyrimidine nucleotides. The large subunit (synthetase) binds the substrates ammonia (free or transferred from glutamine from the small subunit), hydrogencarbonate and ATP and carries out an ATP-coupled ligase reaction, activating hydrogencarbonate by forming carboxy phosphate which reacts with ammonia to form carbamoyl phosphate. This is Carbamoyl phosphate synthase large chain from Streptococcus sanguinis (strain SK36).